We begin with the raw amino-acid sequence, 241 residues long: Acetoacetyl-CoA reductase (241 aa).

Residues 12–14 (RGI), arginine 39, and 82–86 (NAGIT) each bind NADP(+). Substrate contacts are provided by residues aspartate 88 and 141–144 (QMGQ). The active-site Proton acceptor is the tyrosine 147. Residue 177-180 (PGYI) participates in NADP(+) binding. 178 to 179 (GY) is a substrate binding site.

The protein belongs to the short-chain dehydrogenases/reductases (SDR) family.

The protein localises to the cytoplasm. The enzyme catalyses a (3R)-3-hydroxyacyl-CoA + NADP(+) = a 3-oxoacyl-CoA + NADPH + H(+). It functions in the pathway biopolymer metabolism; poly-(R)-3-hydroxybutanoate biosynthesis. The sequence is that of Acetoacetyl-CoA reductase from Rhizobium meliloti (strain 1021) (Ensifer meliloti).